The following is a 577-amino-acid chain: Arginine--tRNA ligase (577 aa).

Residues 122-132 carry the 'HIGH' region motif; the sequence is PNVAKEMHVGH.

This sequence belongs to the class-I aminoacyl-tRNA synthetase family. In terms of assembly, monomer.

It localises to the cytoplasm. The catalysed reaction is tRNA(Arg) + L-arginine + ATP = L-arginyl-tRNA(Arg) + AMP + diphosphate. The polypeptide is Arginine--tRNA ligase (Salmonella paratyphi A (strain ATCC 9150 / SARB42)).